The chain runs to 105 residues: MVKLIESKEAFQEALAAAGDKLVVVDFSATWCGPCKMIKPFFHSLCDKYSNVVFLEVDVDDCQDVAADCEVKCMPTFQFYKKGQKVGEFSGANKEKLEASITEYA.

A Thioredoxin domain is found at 2–105 (VKLIESKEAF…KLEASITEYA (104 aa)). K3 carries the N6-acetyllysine modification. Residue K8 is modified to N6-succinyllysine. Residues C32 and C35 each act as nucleophile in the active site. C32 and C35 form a disulfide bridge. The residue at position 39 (K39) is an N6-acetyllysine. C62 and C69 each carry S-nitrosocysteine. Residue C73 is modified to S-nitrosocysteine; alternate. K94 carries the post-translational modification N6-acetyllysine; alternate. K94 is subject to N6-succinyllysine; alternate.

The protein belongs to the thioredoxin family. Homodimer; disulfide-linked. Interacts with TXNIP through the redox-active site. Interacts with MAP3K5 and CASP3. Interacts with APEX1; the interaction stimulates the FOS/JUN AP-1 DNA-binding activity in a redox-dependent manner. In the fully reduced protein, both Cys-69 and Cys-73 are nitrosylated in response to nitric oxide (NO). When two disulfide bonds are present in the protein, only Cys-73 is nitrosylated. Cys-73 can serve as donor for nitrosylation of target proteins.

It is found in the nucleus. Its subcellular location is the cytoplasm. It localises to the secreted. Functionally, participates in various redox reactions through the reversible oxidation of its active center dithiol to a disulfide and catalyzes dithiol-disulfide exchange reactions. Plays a role in the reversible S-nitrosylation of cysteine residues in target proteins, and thereby contributes to the response to intracellular nitric oxide. Nitrosylates the active site Cys of CASP3 in response to nitric oxide (NO), and thereby inhibits caspase-3 activity. Induces the FOS/JUN AP-1 DNA binding activity in ionizing radiation (IR) cells through its oxidation/reduction status and stimulates AP-1 transcriptional activity. ADF augments the expression of the interleukin-2 receptor TAC (IL2R/P55). The protein is Thioredoxin (Txn) of Mus musculus (Mouse).